A 669-amino-acid chain; its full sequence is MTIPLEIQQRCQQLKTELQRASYAYYVLDDPFIPDSVYDQLYRELEDIEKRYPQLITPDSPTQRVGDKISSQFVSVRHNIPLYSLENAFNLEELNKWGNRWQRYVNETQDTEYVCELKIDGSALALTYENGFLVRGVTRGDGVTGEDITPNVRTIRSIPLRLNIDNPPAIVEVRGEAFLPLDTFDKINQEREEKRESLFANPRNAAAGTLRQLDPKIVDKRRLQFFAYTLHLDDNNITNQWQSLDRLESMGFLVNPHRQLCPSLQQVAQYYQDWQEKRHQLAYMTDGVVVKINDLQRQNRLGFTQKFPRWAIALKYPAEEVPTVVKDIIINVGRTGAVTPMAVMEPVQVAGTTVQRATLHNSDRVAELDIRVGDTVIIRKAGEIIPEVVRILPELRPNHTSPFQMPTNCPECQSPLVRPVGEAVTRCVNSSCPAILRGSVVHWASRDALDIRGLGEKVVILLIEQGLVTAISDLYSLEKTEIAKLDRMGEKSALNLITAMAQSKNQSWSRVLYGLGIRYVGSVNAKILAESFRTVEELANASVTDLASIYGIGEEIAQSVYDWFRIEANRDLVAKLQAAGLQFAAAAKTTTTKATLAGKTFVITGTLPTLKREEAKELIEKAGGKVTGSVSKKTDYLVLGEAAGSKLEKALELGITQLTEAQLLELIKA.

Residues 35-39 (DSVYD), 84-85 (SL), and Glu116 each bind NAD(+). Lys118 serves as the catalytic N6-AMP-lysine intermediate. NAD(+)-binding residues include Arg139, Glu176, Lys291, and Lys315. 4 residues coordinate Zn(2+): Cys409, Cys412, Cys427, and Cys432. The 79-residue stretch at 591 to 669 (TTKATLAGKT…EAQLLELIKA (79 aa)) folds into the BRCT domain.

This sequence belongs to the NAD-dependent DNA ligase family. LigA subfamily. It depends on Mg(2+) as a cofactor. Mn(2+) is required as a cofactor.

It catalyses the reaction NAD(+) + (deoxyribonucleotide)n-3'-hydroxyl + 5'-phospho-(deoxyribonucleotide)m = (deoxyribonucleotide)n+m + AMP + beta-nicotinamide D-nucleotide.. Its function is as follows. DNA ligase that catalyzes the formation of phosphodiester linkages between 5'-phosphoryl and 3'-hydroxyl groups in double-stranded DNA using NAD as a coenzyme and as the energy source for the reaction. It is essential for DNA replication and repair of damaged DNA. The protein is DNA ligase of Microcystis aeruginosa (strain NIES-843 / IAM M-2473).